The following is a 393-amino-acid chain: tRNA(Met) cytidine acetate ligase (393 aa).

Positions 81, 142, and 167 each coordinate ATP.

It belongs to the TmcAL family.

The protein resides in the cytoplasm. The catalysed reaction is cytidine(34) in elongator tRNA(Met) + acetate + ATP = N(4)-acetylcytidine(34) in elongator tRNA(Met) + AMP + diphosphate. Its function is as follows. Catalyzes the formation of N(4)-acetylcytidine (ac(4)C) at the wobble position of elongator tRNA(Met), using acetate and ATP as substrates. First activates an acetate ion to form acetyladenylate (Ac-AMP) and then transfers the acetyl group to tRNA to form ac(4)C34. This Bacillus cereus (strain Q1) protein is tRNA(Met) cytidine acetate ligase.